The primary structure comprises 852 residues: Disks large homolog 2 (852 aa).

2 S-palmitoyl cysteine lipidation sites follow: Cys5 and Cys7. Phosphoserine is present on Ser28. Tyr58 carries the post-translational modification Phosphotyrosine. At Ser65 the chain carries Phosphoserine. 2 PDZ domains span residues 98 to 185 (EITL…RRRR) and 193 to 280 (EIKL…GKPT). A phosphoserine mark is found at Ser307, Ser328, Ser360, Ser365, Ser406, and Ser414. The region spanning 421-502 (KVVLHKGSTG…TVTIIAQYQP (82 aa)) is the PDZ 3 domain. Tyr505 is subject to Phosphotyrosine. 3 positions are modified to phosphoserine: Ser528, Ser530, and Ser553. In terms of domain architecture, SH3 spans 536–606 (KRSLYVRAMF…PSKRRVERKE (71 aa)). In terms of domain architecture, Guanylate kinase-like spans 662 to 837 (TRPVIILGPM…IYNQCKLVIE (176 aa)). Phosphotyrosine is present on residues Tyr732 and Tyr737.

As to quaternary structure, interacts with NOS1/nNOS through second PDZ domain. Interacts with KCNJ2/Kir2.1 (via C-terminus) through one of its PDZ domains. Interacts with KCNJ4. Interacts with FRMPD4 (via C-terminus). Interacts through its PDZ domains with NETO1. Interacts with LRFN1, LRFN2 and LRFN4. Interacts with FASLG. Interacts with KCNJ4. Interacts with ADAM22. Interacts with DGKI (via PDZ-binding motif). Palmitoylation of isoform 1 and isoform 2 is not required for targeting to postsynaptic density. In terms of tissue distribution, brain. Highest levels of isoform 1 in cortex, olfactory bulb, thalamus, hypothalamus, striatum and hippocampus. Highest level of isoform 2 in olfactory bulb. Reduced levels in cortex and hippocampus. Highest level of isoform 4 in spinal cord. Low levels of isoform 4, isoform 6, and isoform 7 in superior cervical ganglion.

The protein resides in the cell membrane. The protein localises to the postsynaptic density. It is found in the synapse. Its subcellular location is the membrane. It localises to the cell projection. The protein resides in the axon. The protein localises to the perikaryon. In terms of biological role, required for perception of chronic pain through NMDA receptor signaling. Regulates surface expression of NMDA receptors in dorsal horn neurons of the spinal cord. Interacts with the cytoplasmic tail of NMDA receptor subunits as well as inward rectifying potassium channels. Involved in regulation of synaptic stability at cholinergic synapses. Part of the postsynaptic protein scaffold of excitatory synapses. The protein is Disks large homolog 2 (Dlg2) of Mus musculus (Mouse).